Consider the following 215-residue polypeptide: Probable phosphoglycerate mutase GpmB (215 aa).

Residues 8–15 (RHGETQWN), 21–22 (QG), Arg-58, Lys-60, 82–85 (ELDM), 104–105 (RR), and 151–152 (GI) each bind substrate. His-9 (tele-phosphohistidine intermediate) is an active-site residue. Glu-82 (proton donor/acceptor) is an active-site residue.

The protein belongs to the phosphoglycerate mutase family. GpmB subfamily.

It carries out the reaction (2R)-2-phosphoglycerate = (2R)-3-phosphoglycerate. The protein operates within carbohydrate degradation; glycolysis; pyruvate from D-glyceraldehyde 3-phosphate: step 3/5. In Salmonella arizonae (strain ATCC BAA-731 / CDC346-86 / RSK2980), this protein is Probable phosphoglycerate mutase GpmB.